The sequence spans 185 residues: Ribosome-recycling factor (185 aa).

The protein belongs to the RRF family.

It is found in the cytoplasm. Functionally, responsible for the release of ribosomes from messenger RNA at the termination of protein biosynthesis. May increase the efficiency of translation by recycling ribosomes from one round of translation to another. This chain is Ribosome-recycling factor, found in Shewanella sp. (strain MR-4).